The primary structure comprises 118 residues: Small ribosomal subunit protein uS13 (118 aa).

The disordered stretch occupies residues 94–118; sequence NLPVRGQNTKNNARTRKGPIRSIKR. Residues 106 to 118 show a composition bias toward basic residues; the sequence is ARTRKGPIRSIKR.

Belongs to the universal ribosomal protein uS13 family. Part of the 30S ribosomal subunit. Forms a loose heterodimer with protein S19. Forms two bridges to the 50S subunit in the 70S ribosome.

Its function is as follows. Located at the top of the head of the 30S subunit, it contacts several helices of the 16S rRNA. In the 70S ribosome it contacts the 23S rRNA (bridge B1a) and protein L5 of the 50S subunit (bridge B1b), connecting the 2 subunits; these bridges are implicated in subunit movement. Contacts the tRNAs in the A and P-sites. The sequence is that of Small ribosomal subunit protein uS13 from Psychrobacter sp. (strain PRwf-1).